A 561-amino-acid chain; its full sequence is Type 2 DNA topoisomerase 6 subunit B (561 aa).

ATP is bound by residues asparagine 46, aspartate 78, 99–100 (TK), 109–116 (GQQGIGIS), and lysine 471.

This sequence belongs to the TOP6B family. Homodimer. Heterotetramer of two Top6A and two Top6B chains.

The catalysed reaction is ATP-dependent breakage, passage and rejoining of double-stranded DNA.. Its function is as follows. Relaxes both positive and negative superturns and exhibits a strong decatenase activity. This chain is Type 2 DNA topoisomerase 6 subunit B, found in Thermococcus gammatolerans (strain DSM 15229 / JCM 11827 / EJ3).